We begin with the raw amino-acid sequence, 451 residues long: Tubulin alpha-2 chain (451 aa).

A GTP-binding site is contributed by Q11. An N6-acetyllysine modification is found at K40. GTP-binding residues include E71, S140, G144, T145, T179, N206, and N228. E71 serves as a coordination point for Mg(2+). E254 is a catalytic residue. The segment at 432–451 (YEEVGIDTADGEDDEEANDY) is disordered.

The protein belongs to the tubulin family. Dimer of alpha and beta chains. A typical microtubule is a hollow water-filled tube with an outer diameter of 25 nm and an inner diameter of 15 nM. Alpha-beta heterodimers associate head-to-tail to form protofilaments running lengthwise along the microtubule wall with the beta-tubulin subunit facing the microtubule plus end conferring a structural polarity. Microtubules usually have 13 protofilaments but different protofilament numbers can be found in some organisms and specialized cells. The cofactor is Mg(2+). In terms of processing, undergoes a tyrosination/detyrosination cycle, the cyclic removal and re-addition of a C-terminal tyrosine residue by the enzymes tubulin tyrosine carboxypeptidase (TTCP) and tubulin tyrosine ligase (TTL), respectively. Post-translationally, acetylation of alpha chains at Lys-40 stabilizes microtubules and affects affinity and processivity of microtubule motors. This modification has a role in multiple cellular functions, ranging from cell motility, cell cycle progression or cell differentiation to intracellular trafficking and signaling.

It localises to the cytoplasm. It is found in the cytoskeleton. The catalysed reaction is GTP + H2O = GDP + phosphate + H(+). Its function is as follows. Tubulin is the major constituent of microtubules, a cylinder consisting of laterally associated linear protofilaments composed of alpha- and beta-tubulin heterodimers. Microtubules grow by the addition of GTP-tubulin dimers to the microtubule end, where a stabilizing cap forms. Below the cap, tubulin dimers are in GDP-bound state, owing to GTPase activity of alpha-tubulin. The protein is Tubulin alpha-2 chain of Homarus americanus (American lobster).